The sequence spans 527 residues: DNA damage-binding protein cmr1 (527 aa).

A disordered region spans residues 35–90; it reads AGLFPPKSARSSPGGLTKPKKKPAPKKVKKEDEDLVPRRMSSRLRGLAADSEVAKR. Basic residues predominate over residues 52–62; it reads KPKKKPAPKKV. WD repeat units lie at residues 185–226, 249–289, 296–336, 341–381, 388–427, 450–493, and 496–527; these read LTPE…PISA, PHTR…SVEK, SDDI…RSAV, LSEK…HDEP, VSRLSVSHAAFNSAGQIATSSYDDTLKIYDFGSKGIAAWK, GRWV…LAQL, and DGITAVPAVAVFHRSTNWIAGGTASGKICLWM. Residues 284 to 303 form a disordered region; sequence TTSVEKYAPESTSDDIPISG.

The protein belongs to the WD repeat DDB2/WDR76 family.

Its function is as follows. DNA-binding protein that binds to both single- and double-stranded DNA. Binds preferentially to UV-damaged DNA. May be involved in DNA-metabolic processes. This chain is DNA damage-binding protein cmr1, found in Neosartorya fischeri (strain ATCC 1020 / DSM 3700 / CBS 544.65 / FGSC A1164 / JCM 1740 / NRRL 181 / WB 181) (Aspergillus fischerianus).